A 1630-amino-acid polypeptide reads, in one-letter code: Merozoite surface protein 1 (1630 aa).

The N-terminal stretch at Met-1–Cys-19 is a signal peptide. The tract at residues Thr-60–Ala-113 is disordered. Residues Ser-67–Thr-84 form a tripeptide SG(TP) repeat region. The span at Ser-67–Ser-88 shows a compositional bias: low complexity. Residues Arg-89–Thr-98 show a composition bias toward polar residues. Asn-97 is a glycosylation site (N-linked (GlcNAc...) asparagine). A compositionally biased stretch (low complexity) spans Ser-99–Ala-108. An N-linked (GlcNAc...) asparagine glycan is attached at Asn-259. The interval Lys-680–Asn-755 is disordered. Composition is skewed to polar residues over residues Thr-685–Ser-695 and Gly-702–Gly-713. Over residues Val-721–Gln-732 the composition is skewed to low complexity. N-linked (GlcNAc...) asparagine glycans are attached at residues Asn-755, Asn-759, Asn-774, and Asn-835. The disordered stretch occupies residues Ser-884–His-906. Asn-911, Asn-955, Asn-1049, Asn-1156, and Asn-1165 each carry an N-linked (GlcNAc...) asparagine glycan. The required for binding to host erythrocyte cell membrane stretch occupies residues Gln-993–Tyr-1107. The span at Val-1190–Pro-1203 shows a compositional bias: polar residues. The interval Val-1190–Thr-1220 is disordered. 2 N-linked (GlcNAc...) asparagine glycosylation sites follow: Asn-1436 and Asn-1517. 2 consecutive EGF-like domains span residues His-1521–Pro-1561 and Asn-1562–Ser-1610. 6 disulfide bridges follow: Cys-1523/Cys-1534, Cys-1528/Cys-1544, Cys-1546/Cys-1557, Cys-1565/Cys-1578, Cys-1572/Cys-1592, and Cys-1594/Cys-1608. Ser-1609 carries the GPI-anchor amidated serine lipid modification. A propeptide spans Ser-1610–Ile-1630 (removed in mature form).

Forms a complex composed of subunits p83, p30, p38, and p42 which remain non-covalently associated; the complex is formed at the merozoite surface prior to egress from host erythrocytes. Forms a complex composed of processed MSP1 subunits, MSP6 subunit p36 and MSP7; the complex is formed at the merozoite surface prior to egress from host erythrocytes. Within the complex, interacts (via subunit p38) with MSP6 subunit p36 and (via subunits p83, p30 and p38) with MSP7 (via subunit p22). Forms a complex composed of MSP1, MSP6, DBLMSP1 and DBLMSP2. Within the complex, interacts (via subunit p38) with DBLMSP1 and DBLMSP2. Forms a complex composed of MSP1, and rhoptry proteins RhopH3, RAP1 and CLAG9/RhopH3. Within the complex, interacts (via subunits p42 and p19) with RhopH3 (via C-terminus). Forms a complex composed of MSP1, MSP6, MSP7, MSP9 and MSP3; within the complex, MSP6 and MSP9 mediate the binding to the host erythrocyte. Interacts (via subunits p19 and p42) with MSP9; the interaction is direct; MSP1 subunits p19 or p42, and MSP9 form a co-ligand complex that interacts with host SLC4A1/Band 3 protein. May interact with PFD6. Interacts with host spectrin. In terms of assembly, interacts with host glycophorin GYPA in a sialic acid-independent manner. As to quaternary structure, interacts with host proinflammatory cytokine S100P; the interaction blocks S100P inflammatory and chemotactic activities. Interacts with host SLC4A1/Band 3 (via 5ABC region) on the host erythrocyte surface in a sialic acid-independent manner. Post-translationally, the p190 precursor is cleaved by SUB1 prior to merozoite egress into 4 subunits p83, p30, p38, and p42 which remain non-covalently associated. SUB1-mediated proteolytic cleavage occurs in an orderly manner; the first cleavage occurs at the p83/p30 site, followed by cleavage at the p30/p38 site, the last cleavage occurs at the p38/p42 site. The order of cleavage is essential for parasite viability. SUB1-mediated processing is essential for merozoite egress. In a second processing step during erythrocyte invasion, p42 is cleaved by SUB2 into p33 and p19; the latter remains attached to the merozoite surface via its GPI-anchor and stays on the surface during the subsequent ring stage.

It localises to the cell membrane. It is found in the secreted. The protein localises to the vacuole membrane. In terms of biological role, during the asexual blood stage, involved in merozoite egress from host erythrocytes possibly via its interaction with the host cytoskeleton protein spectrin resulting in the destabilization of the host cytoskeleton and thus leading to erythrocyte cell membrane rupture. Involved in the binding to host erythrocytes and is required for host erythrocyte invasion. Functionally, by binding to host proinflammatory cytokine S100P may interfere with host immune responses. Its function is as follows. Involved in merozoite invasion of host erythrocytes. May play a role in the biogenesis and/or function of the food vacuole during the intraerythrocytic development. The sequence is that of Merozoite surface protein 1 from Plasmodium falciparum (isolate K1 / Thailand).